We begin with the raw amino-acid sequence, 345 residues long: Ferrochelatase (345 aa).

Positions 215 and 296 each coordinate Fe cation.

This sequence belongs to the ferrochelatase family.

It localises to the cytoplasm. It catalyses the reaction heme b + 2 H(+) = protoporphyrin IX + Fe(2+). Its pathway is porphyrin-containing compound metabolism; protoheme biosynthesis; protoheme from protoporphyrin-IX: step 1/1. Its function is as follows. Catalyzes the ferrous insertion into protoporphyrin IX. This is Ferrochelatase from Rhodopseudomonas palustris (strain HaA2).